Consider the following 405-residue polypeptide: Teichoic acid D-alanyltransferase (405 aa).

At Met-1–Asn-9 the chain is on the extracellular side. Residues Pro-10–Lys-29 traverse the membrane as a helical segment. The Cytoplasmic portion of the chain corresponds to Gly-30–Met-33. A helical transmembrane segment spans residues His-34–Phe-49. The Extracellular segment spans residues Asp-50–Lys-53. A helical transmembrane segment spans residues Trp-54–Arg-80. The Cytoplasmic portion of the chain corresponds to Glu-81–Ser-86. A helical membrane pass occupies residues Thr-87–Gln-111. At His-112 to Gly-121 the chain is on the extracellular side. The chain crosses the membrane as a helical span at residues Ile-122 to Asp-138. The Cytoplasmic portion of the chain corresponds to Gly-139–Asn-145. The stretch at Met-146–Asp-175 is an intramembrane region. At Arg-176–Asp-179 the chain is on the cytoplasmic side. Residues Pro-180–Ser-223 form a helical membrane-spanning segment. Residues Arg-224–Ser-232 are Extracellular-facing. The helical transmembrane segment at Trp-233–Met-264 threads the bilayer. The Cytoplasmic portion of the chain corresponds to Gly-265–Lys-274. Residues Pro-275–His-310 lie within the membrane without spanning it. The Cytoplasmic segment spans residues Lys-311 to Ser-315. Residues Arg-316–His-335 traverse the membrane as a helical segment. His-335 is an active-site residue. At Gly-336–Thr-338 the chain is on the extracellular side. Residues Trp-339–Asn-372 traverse the membrane as a helical segment. Residues Arg-373 to Pro-378 are Cytoplasmic-facing. A helical membrane pass occupies residues Ser-379 to Leu-399. Topologically, residues Asp-400–His-405 are extracellular.

Belongs to the membrane-bound acyltransferase family.

It localises to the cell membrane. Its pathway is cell wall biogenesis; lipoteichoic acid biosynthesis. Functionally, O-acyltransferase that catalyzes D-alanylation of both teichoic acid and lipoteichoic acid (LTA). D-alanylation of LTA plays an important role in modulating the properties of the cell wall in Gram-positive bacteria, influencing the net charge of the cell wall. Catalyzes D-alanylation from DltC carrier protein. The polypeptide is Teichoic acid D-alanyltransferase (Lacticaseibacillus rhamnosus (Lactobacillus rhamnosus)).